The primary structure comprises 266 residues: Cell division cycle-associated protein 3 (266 aa).

The tract at residues 1 to 84 is disordered; it reads MGSTQSVSGT…TPMKISGPDP (84 aa). Phosphoserine is present on residues Ser29 and Ser31. The segment covering 32–46 has biased composition (polar residues); it reads AGIQRTPIQVESSPQ. The residue at position 37 (Thr37) is a Phosphothreonine. Phosphoserine occurs at positions 44 and 67. A Phosphothreonine modification is found at Thr75. The segment at 90-119 is F-box-like; sequence KELSEVLETEASESISSPELALPRETPLFY. Phosphoserine is present on Ser93. 2 disordered regions span residues 120–225 and 242–266; these read DLDL…LSEN and KAGG…LLES. A compositionally biased stretch (basic and acidic residues) spans 143-156; that stretch reads LDPKQVFTKEEAKQ. Polar residues predominate over residues 157-168; that stretch reads SAETIAASQNSD. Ser197 is modified (phosphoserine). Position 200 is a phosphothreonine (Thr200). A compositionally biased stretch (polar residues) spans 203–213; that stretch reads QDDNSPGTLTL. The residue at position 207 (Ser207) is a Phosphoserine. Thr210 is modified (phosphothreonine). Residues 250 to 259 are compositionally biased toward basic and acidic residues; that stretch reads PNQDHDKENQ. A KEN box motif is present at residues 256–258; the sequence is KEN.

Interacts with SKP1. Part of a SCF (SKP1-cullin-F-box) protein ligase complex. In terms of processing, ubiquitinated and degraded by the APC/C-Cdh1 complex.

The protein resides in the cytoplasm. The protein localises to the cytosol. Its pathway is protein modification; protein ubiquitination. In terms of biological role, F-box-like protein which is required for entry into mitosis. Acts by participating in E3 ligase complexes that mediate the ubiquitination and degradation of WEE1 kinase at G2/M phase. The protein is Cell division cycle-associated protein 3 (Cdca3) of Mus musculus (Mouse).